The chain runs to 326 residues: Transmembrane protein 255B (326 aa).

The next 4 helical transmembrane spans lie at 26–46, 55–75, 85–105, and 200–220; these read LWFV…GLAA, VGGY…IIGI, LVAA…CAIV, and AVLN…LGAF. The tract at residues 284–326 is disordered; that stretch reads LASSEDLQPPSPSSSGSGLPGQAPPCYAPTYFPPGEKPPPYAP. Pro residues predominate over residues 305–326; sequence QAPPCYAPTYFPPGEKPPPYAP.

Belongs to the TMEM255 family.

It localises to the membrane. The protein is Transmembrane protein 255B (TMEM255B) of Homo sapiens (Human).